A 276-amino-acid polypeptide reads, in one-letter code: Large ribosomal subunit protein uL2 (276 aa).

2 disordered regions span residues methionine 1–aspartate 20 and threonine 219–lysine 276. The segment covering asparagine 7–aspartate 20 has biased composition (polar residues).

It belongs to the universal ribosomal protein uL2 family. Part of the 50S ribosomal subunit. Forms a bridge to the 30S subunit in the 70S ribosome.

Its function is as follows. One of the primary rRNA binding proteins. Required for association of the 30S and 50S subunits to form the 70S ribosome, for tRNA binding and peptide bond formation. It has been suggested to have peptidyltransferase activity; this is somewhat controversial. Makes several contacts with the 16S rRNA in the 70S ribosome. The chain is Large ribosomal subunit protein uL2 from Bacillus cereus (strain G9842).